Reading from the N-terminus, the 224-residue chain is UPF0758 protein CV_3079 (224 aa).

One can recognise an MPN domain in the interval A102–L224. 3 residues coordinate Zn(2+): H173, H175, and D186. The JAMM motif motif lies at H173–D186.

The protein belongs to the UPF0758 family.

The sequence is that of UPF0758 protein CV_3079 from Chromobacterium violaceum (strain ATCC 12472 / DSM 30191 / JCM 1249 / CCUG 213 / NBRC 12614 / NCIMB 9131 / NCTC 9757 / MK).